Reading from the N-terminus, the 100-residue chain is MITEERILTVLRAPHISEKATMAAESANTIVFKVAITATKREIKAAVEKLFEVEVKSVNTLVAKGKTKSQGARQGRRSDWKKAYVILKEGQDIDFAGSAE.

It belongs to the universal ribosomal protein uL23 family. As to quaternary structure, part of the 50S ribosomal subunit. Contacts protein L29, and trigger factor when it is bound to the ribosome.

One of the early assembly proteins it binds 23S rRNA. One of the proteins that surrounds the polypeptide exit tunnel on the outside of the ribosome. Forms the main docking site for trigger factor binding to the ribosome. The protein is Large ribosomal subunit protein uL23 of Photobacterium profundum (strain SS9).